Consider the following 143-residue polypeptide: 3-dehydroquinate dehydratase (143 aa).

The active-site Proton acceptor is Tyr-21. Residues Asn-73, His-79, and Asp-86 each coordinate substrate. The active-site Proton donor is the His-99. Substrate is bound by residues 100–101 and Arg-110; that span reads IS.

The protein belongs to the type-II 3-dehydroquinase family. Homododecamer.

The enzyme catalyses 3-dehydroquinate = 3-dehydroshikimate + H2O. It functions in the pathway metabolic intermediate biosynthesis; chorismate biosynthesis; chorismate from D-erythrose 4-phosphate and phosphoenolpyruvate: step 3/7. Catalyzes a trans-dehydration via an enolate intermediate. The chain is 3-dehydroquinate dehydratase from Deinococcus radiodurans (strain ATCC 13939 / DSM 20539 / JCM 16871 / CCUG 27074 / LMG 4051 / NBRC 15346 / NCIMB 9279 / VKM B-1422 / R1).